We begin with the raw amino-acid sequence, 400 residues long: MPHFLAKLDSKPLEYPLIRGDFCFHREFLSLKHPTKSCVHASFKNDVFLLQKIRRAGDFLIKSEKATPLKREILKQALRIYSQSFEVISHNLQENSKHASQKKALDLETFEDFIQKNQAPILIEIGFGSGRHLIELAKNNPTTTCLGIEIHTPSIAQALKQIELLDLKNLHILQGDGRLVLESMPNHRCEKIFVHFPVPWNEKKHRRVLSEKFLNEALRVLKPRGFLELRTDDSLCFEDSLKLALKNFQCEIEIKKNAQIPVVSKYEARWNKLKKDIYDLKIYSLGLDENPTQNHALDFSFDTITIDKESVGAILKTPKIIKEGYFVHVCNIYENKGDFLVELSMGDFDWPVRLFVLLAENQVFYLNKSPLKTLNNHKAHLLLQNILSQKELDERDHRSE.

Residues Glu124, Glu149, and Asp176 each coordinate S-adenosyl-L-methionine. Asp232 is a substrate binding site.

The protein belongs to the class I-like SAM-binding methyltransferase superfamily. TrmB family.

The enzyme catalyses guanosine(46) in tRNA + S-adenosyl-L-methionine = N(7)-methylguanosine(46) in tRNA + S-adenosyl-L-homocysteine. It participates in tRNA modification; N(7)-methylguanine-tRNA biosynthesis. In terms of biological role, catalyzes the formation of N(7)-methylguanine at position 46 (m7G46) in tRNA. This Helicobacter pylori (strain J99 / ATCC 700824) (Campylobacter pylori J99) protein is tRNA (guanine-N(7)-)-methyltransferase.